Reading from the N-terminus, the 298-residue chain is Ornithine carbamoyltransferase (298 aa).

Residues Ser-50 to Thr-53, Gln-77, Arg-101, and His-128 to Gln-131 contribute to the carbamoyl phosphate site. L-ornithine is bound by residues Asn-159, Asp-216, and Ser-220–Met-221. Residues Cys-256–Leu-257 and Arg-284 each bind carbamoyl phosphate.

It belongs to the aspartate/ornithine carbamoyltransferase superfamily. OTCase family.

The protein localises to the cytoplasm. The enzyme catalyses carbamoyl phosphate + L-ornithine = L-citrulline + phosphate + H(+). Its pathway is amino-acid biosynthesis; L-arginine biosynthesis; L-arginine from L-ornithine and carbamoyl phosphate: step 1/3. In terms of biological role, reversibly catalyzes the transfer of the carbamoyl group from carbamoyl phosphate (CP) to the N(epsilon) atom of ornithine (ORN) to produce L-citrulline. This Methylococcus capsulatus (strain ATCC 33009 / NCIMB 11132 / Bath) protein is Ornithine carbamoyltransferase.